Here is a 64-residue protein sequence, read N- to C-terminus: Large ribosomal subunit protein bL35 (64 aa).

Belongs to the bacterial ribosomal protein bL35 family.

The chain is Large ribosomal subunit protein bL35 from Wolinella succinogenes (strain ATCC 29543 / DSM 1740 / CCUG 13145 / JCM 31913 / LMG 7466 / NCTC 11488 / FDC 602W) (Vibrio succinogenes).